A 151-amino-acid polypeptide reads, in one-letter code: Transcriptional regulator SyrB (151 aa).

Residues 1-61 form a disordered region; the sequence is MADESNTGPV…RYSEQERNDK (61 aa). A compositionally biased stretch (low complexity) spans 33–48; the sequence is PQKAAAEPAQPKAPAA. Positions 52–61 are enriched in basic and acidic residues; it reads RYSEQERNDK.

This sequence belongs to the SyrB family.

Functionally, responsible for the repression of SyrM activity. In Rhizobium meliloti (strain 1021) (Ensifer meliloti), this protein is Transcriptional regulator SyrB (syrB).